Reading from the N-terminus, the 284-residue chain is Polyamine aminopropyltransferase (284 aa).

Residues 2 to 237 enclose the PABS domain; the sequence is ELWYTEEQTQ…GYWLFGFASK (236 aa). Q31 is an S-methyl-5'-thioadenosine binding site. Spermidine is bound by residues H62 and D86. Residues E106 and 137-138 contribute to the S-methyl-5'-thioadenosine site; that span reads DG. The Proton acceptor role is filled by D155. A spermidine-binding site is contributed by 155–158; the sequence is DSTD. S-methyl-5'-thioadenosine is bound at residue P162.

This sequence belongs to the spermidine/spermine synthase family. Homodimer or homotetramer.

The protein localises to the cytoplasm. It catalyses the reaction S-adenosyl 3-(methylsulfanyl)propylamine + putrescine = S-methyl-5'-thioadenosine + spermidine + H(+). Its pathway is amine and polyamine biosynthesis; spermidine biosynthesis; spermidine from putrescine: step 1/1. Its function is as follows. Catalyzes the irreversible transfer of a propylamine group from the amino donor S-adenosylmethioninamine (decarboxy-AdoMet) to putrescine (1,4-diaminobutane) to yield spermidine. The polypeptide is Polyamine aminopropyltransferase (Alkaliphilus metalliredigens (strain QYMF)).